The following is a 549-amino-acid chain: Glucose-6-phosphate isomerase (549 aa).

Catalysis depends on glutamate 355, which acts as the Proton donor. Catalysis depends on residues histidine 387 and lysine 515.

The protein belongs to the GPI family.

It is found in the cytoplasm. It catalyses the reaction alpha-D-glucose 6-phosphate = beta-D-fructose 6-phosphate. It functions in the pathway carbohydrate biosynthesis; gluconeogenesis. The protein operates within carbohydrate degradation; glycolysis; D-glyceraldehyde 3-phosphate and glycerone phosphate from D-glucose: step 2/4. Functionally, catalyzes the reversible isomerization of glucose-6-phosphate to fructose-6-phosphate. The sequence is that of Glucose-6-phosphate isomerase from Histophilus somni (strain 2336) (Haemophilus somnus).